The chain runs to 34 residues: Photosystem II reaction center protein M (34 aa).

The helical transmembrane segment at Ile5–Leu25 threads the bilayer.

The protein belongs to the PsbM family. In terms of assembly, PSII is composed of 1 copy each of membrane proteins PsbA, PsbB, PsbC, PsbD, PsbE, PsbF, PsbH, PsbI, PsbJ, PsbK, PsbL, PsbM, PsbT, PsbX, PsbY, PsbZ, Psb30/Ycf12, at least 3 peripheral proteins of the oxygen-evolving complex and a large number of cofactors. It forms dimeric complexes.

Its subcellular location is the plastid. It localises to the chloroplast thylakoid membrane. One of the components of the core complex of photosystem II (PSII). PSII is a light-driven water:plastoquinone oxidoreductase that uses light energy to abstract electrons from H(2)O, generating O(2) and a proton gradient subsequently used for ATP formation. It consists of a core antenna complex that captures photons, and an electron transfer chain that converts photonic excitation into a charge separation. This subunit is found at the monomer-monomer interface. This chain is Photosystem II reaction center protein M, found in Pleurastrum terricola (Filamentous green alga).